Reading from the N-terminus, the 398-residue chain is MVPPPSNPQQVQQFLSSALSQRGPSSVPYEESNKWLIRQHLLNLISSYPSLEPKTASFMHNDGRSVNLLQADGTIPMPFHGVTYNIPVIIWLLESYPRHPPCVYVNPTADMIIKRPHAHVTPSGLVSLPYLQNWVYPSSNLVDLVSDLSAAFARDPPLYSRRRPQPPPPSPPTVYDSSLSRPPSADQSLPRPFPPSPYGGGVSRVQVQHVHHQQQSDDAAEVFKRNAINKMVEMVHSDLVSMRRAREAEAEELLSLQAGLKRREDELNIGLKEMVEEKETLEQQLQIISMNTDILDSWVRENQGKTKNLVDLDVDNAFECGDTLSKQMLECTALDLAIEDAIYSLDKSFQDGVVPFDQYLRNVRLLSREQFFHRATGSKVRAAQMEVQVAAIAGRLHS.

Positions 18–162 constitute a UEV domain; that stretch reads ALSQRGPSSV…ARDPPLYSRR (145 aa). Residues 157–202 form a disordered region; that stretch reads PLYSRRRPQPPPPSPPTVYDSSLSRPPSADQSLPRPFPPSPYGGGV. Over residues 175 to 187 the composition is skewed to polar residues; it reads YDSSLSRPPSADQ. Residues 247-291 adopt a coiled-coil conformation; the sequence is EAEAEELLSLQAGLKRREDELNIGLKEMVEEKETLEQQLQIISMN. Residues 322 to 390 enclose the SB domain; it reads DTLSKQMLEC…RAAQMEVQVA (69 aa).

It belongs to the ubiquitin-conjugating enzyme family. UEV subfamily. As to quaternary structure, component of the endosomal sorting required for transport complex I (ESCRT-I), composed of ELC, VPS28 and VPS37. Interacts with VPS28 and VPS37. Binds ubiquitin in vitro. Interacts with FREE1. Interacts with TOL9/TOM1D. Interacts with BRO1/ALIX. Interacts with SINAT1, SINAT2, SINAT3 and SINAT4. Post-translationally, ubiquitinated by SINAT1, SINAT2, SINAT3 and SINAT4 for subsequent proteasomal degradation. Expressed in roots, stems, leaves and flowers.

It is found in the early endosome. The protein resides in the late endosome. It localises to the prevacuolar compartment. Its function is as follows. Component of the ESCRT-I complex (endosomal sorting complex required for transport I), a regulator of vesicular trafficking process. Required for the sorting of endocytic ubiquitinated cargos into multivesicular bodies (MVBs). May control nuclear division through the microtubule cytoskeleton. The sequence is that of Protein ELC from Arabidopsis thaliana (Mouse-ear cress).